The following is an 89-amino-acid chain: Small ribosomal subunit protein bS20 (89 aa).

Residues 1–28 (MTLANIKSAKKRAVQSEKRRQHNASQRS) are disordered.

Belongs to the bacterial ribosomal protein bS20 family.

In terms of biological role, binds directly to 16S ribosomal RNA. The chain is Small ribosomal subunit protein bS20 from Haemophilus ducreyi (strain 35000HP / ATCC 700724).